A 179-amino-acid polypeptide reads, in one-letter code: Large ribosomal subunit protein uL6 (179 aa).

This sequence belongs to the universal ribosomal protein uL6 family. In terms of assembly, part of the 50S ribosomal subunit.

Its function is as follows. This protein binds to the 23S rRNA, and is important in its secondary structure. It is located near the subunit interface in the base of the L7/L12 stalk, and near the tRNA binding site of the peptidyltransferase center. The polypeptide is Large ribosomal subunit protein uL6 (Geobacter sulfurreducens (strain ATCC 51573 / DSM 12127 / PCA)).